A 288-amino-acid chain; its full sequence is Single myb histone 4 (288 aa).

Disordered stretches follow at residues 1 to 42 (MGAP…PVLS), 62 to 87 (GLGS…SQPL), and 181 to 206 (DSLA…KPSK). The region spanning 1 to 60 (MGAPKQKWTSEEEDALRAGVRKHGAGKWRTIQKDPEFSPVLSSRSNIDLKDKWRNLSFSA) is the HTH myb-type domain. The H-T-H motif DNA-binding region spans 28 to 56 (WRTIQKDPEFSPVLSSRSNIDLKDKWRNL). Over residues 76-87 (PSSSPSSSSQPL) the composition is skewed to low complexity. One can recognise an H15 domain in the interval 113-181 (TLPKYGAMIM…KIDKSYRLPD (69 aa)). The stretch at 230–250 (KVADAEAKAHDAHDQTMEAER) forms a coiled coil.

The protein belongs to the histone H1/H5 family. SMH subfamily. Forms a homodimer and heterodimers.

Its subcellular location is the nucleus. It localises to the chromosome. The protein localises to the nucleolus. The protein resides in the telomere. Its function is as follows. Binds preferentially double-stranded telomeric repeats, but may also bind to the single telomeric strand. The sequence is that of Single myb histone 4 (SMH4) from Zea mays (Maize).